Consider the following 257-residue polypeptide: Imidazole glycerol phosphate synthase subunit HisF (257 aa).

Catalysis depends on residues Asp11 and Asp130.

This sequence belongs to the HisA/HisF family. As to quaternary structure, heterodimer of HisH and HisF.

The protein resides in the cytoplasm. The enzyme catalyses 5-[(5-phospho-1-deoxy-D-ribulos-1-ylimino)methylamino]-1-(5-phospho-beta-D-ribosyl)imidazole-4-carboxamide + L-glutamine = D-erythro-1-(imidazol-4-yl)glycerol 3-phosphate + 5-amino-1-(5-phospho-beta-D-ribosyl)imidazole-4-carboxamide + L-glutamate + H(+). It functions in the pathway amino-acid biosynthesis; L-histidine biosynthesis; L-histidine from 5-phospho-alpha-D-ribose 1-diphosphate: step 5/9. Its function is as follows. IGPS catalyzes the conversion of PRFAR and glutamine to IGP, AICAR and glutamate. The HisF subunit catalyzes the cyclization activity that produces IGP and AICAR from PRFAR using the ammonia provided by the HisH subunit. This is Imidazole glycerol phosphate synthase subunit HisF from Aliivibrio salmonicida (strain LFI1238) (Vibrio salmonicida (strain LFI1238)).